The primary structure comprises 198 residues: Probable nicotinate-nucleotide adenylyltransferase (198 aa).

This sequence belongs to the NadD family.

The enzyme catalyses nicotinate beta-D-ribonucleotide + ATP + H(+) = deamido-NAD(+) + diphosphate. Its pathway is cofactor biosynthesis; NAD(+) biosynthesis; deamido-NAD(+) from nicotinate D-ribonucleotide: step 1/1. Its function is as follows. Catalyzes the reversible adenylation of nicotinate mononucleotide (NaMN) to nicotinic acid adenine dinucleotide (NaAD). The protein is Probable nicotinate-nucleotide adenylyltransferase of Albidiferax ferrireducens (strain ATCC BAA-621 / DSM 15236 / T118) (Rhodoferax ferrireducens).